A 284-amino-acid polypeptide reads, in one-letter code: Tropomyosin (284 aa).

Residues 1–284 (MDAIKKKMLA…DSTFAELAGY (284 aa)) are a coiled coil. The segment at 105–131 (RLQSATEKLEEASKAADESERGRKVLE) is disordered.

This sequence belongs to the tropomyosin family. In terms of assembly, homodimer.

In terms of biological role, tropomyosin, in association with the troponin complex, plays a central role in the calcium dependent regulation of muscle contraction. The polypeptide is Tropomyosin (Cornu aspersum (Brown garden snail)).